The sequence spans 151 residues: Small ribosomal subunit protein uS15 (151 aa).

This sequence belongs to the universal ribosomal protein uS15 family.

This is Small ribosomal subunit protein uS15 (RPS13) from Candida maltosa (Yeast).